Here is a 440-residue protein sequence, read N- to C-terminus: Actin-like protein 7A (440 aa).

A disordered region spans residues 1-29 (MSLDGVWAPQTANIGDGPAKKASDQASMQ). The tract at residues 36 to 56 (ASLKDGPAKRAVWVRRDNAET) is required for interaction with TES.

It belongs to the actin family. Interacts (via N-terminus) with TES (via LIM domain 2). Heterodimer with TES; the heterodimer interacts with ENAH to form a heterotrimer. Interacts with ACTL9. Interacts with CYLC1; the interaction may be relevant for proper acrosome attachment to the nuclear envelope. In terms of tissue distribution, detected in testis. Detected at the acrosome of round spermatids (at protein level). Detected in adult and embryonic testis. Detected in developing male germ cells.

It localises to the cytoplasm. Its subcellular location is the cytoskeleton. The protein resides in the golgi apparatus. It is found in the nucleus. The protein localises to the cytoplasmic vesicle. It localises to the secretory vesicle. Its subcellular location is the acrosome. In terms of biological role, essential for normal spermatogenesis and male fertility. Required for normal sperm head morphology, acroplaxome formation, acrosome attachment, and acrosome granule stability. May anchor and stabilize acrosomal adherence to the acroplaxome at least in part by facilitating the presence of F-actin in the subacrosomal space. May play an important role in formation and fusion of Golgi-derived vesicles during acrosome biogenesis. The sequence is that of Actin-like protein 7A (Actl7a) from Mus musculus (Mouse).